The sequence spans 838 residues: Probable inorganic carbon transporter subunit DabA (838 aa).

Zn(2+)-binding residues include Cys353, Asp355, His537, and Cys552.

It belongs to the inorganic carbon transporter (TC 9.A.2) DabA family. As to quaternary structure, forms a complex with DabB. It depends on Zn(2+) as a cofactor.

It is found in the cell membrane. In terms of biological role, part of an energy-coupled inorganic carbon pump. The polypeptide is Probable inorganic carbon transporter subunit DabA (Chloroflexus aurantiacus (strain ATCC 29366 / DSM 635 / J-10-fl)).